A 131-amino-acid chain; its full sequence is MAKNKFHDGPGPSQRQLRVGEVIRRTLSEVLARGDIHDPELNRLSITVGEVRTSPDLKIATAYVLPLGGKGQEDVLQLLARNKSELRRAIGKKTGLKFTPDLRFQIDETFDRMDDTRRLFNQDAVRRDLED.

This sequence belongs to the RbfA family. As to quaternary structure, monomer. Binds 30S ribosomal subunits, but not 50S ribosomal subunits or 70S ribosomes.

Its subcellular location is the cytoplasm. In terms of biological role, one of several proteins that assist in the late maturation steps of the functional core of the 30S ribosomal subunit. Associates with free 30S ribosomal subunits (but not with 30S subunits that are part of 70S ribosomes or polysomes). Required for efficient processing of 16S rRNA. May interact with the 5'-terminal helix region of 16S rRNA. This is Ribosome-binding factor A from Ruegeria sp. (strain TM1040) (Silicibacter sp.).